A 316-amino-acid polypeptide reads, in one-letter code: 4-hydroxy-3-methylbut-2-enyl diphosphate reductase (316 aa).

Cysteine 12 is a [4Fe-4S] cluster binding site. Residues histidine 41 and histidine 74 each contribute to the (2E)-4-hydroxy-3-methylbut-2-enyl diphosphate site. Histidine 41 and histidine 74 together coordinate dimethylallyl diphosphate. 2 residues coordinate isopentenyl diphosphate: histidine 41 and histidine 74. Cysteine 96 contributes to the [4Fe-4S] cluster binding site. Histidine 124 serves as a coordination point for (2E)-4-hydroxy-3-methylbut-2-enyl diphosphate. A dimethylallyl diphosphate-binding site is contributed by histidine 124. Histidine 124 serves as a coordination point for isopentenyl diphosphate. The active-site Proton donor is glutamate 126. A (2E)-4-hydroxy-3-methylbut-2-enyl diphosphate-binding site is contributed by threonine 168. Cysteine 198 contributes to the [4Fe-4S] cluster binding site. Serine 226, serine 227, asparagine 228, and serine 270 together coordinate (2E)-4-hydroxy-3-methylbut-2-enyl diphosphate. Dimethylallyl diphosphate contacts are provided by serine 226, serine 227, asparagine 228, and serine 270. Isopentenyl diphosphate contacts are provided by serine 226, serine 227, asparagine 228, and serine 270.

This sequence belongs to the IspH family. Requires [4Fe-4S] cluster as cofactor.

The catalysed reaction is isopentenyl diphosphate + 2 oxidized [2Fe-2S]-[ferredoxin] + H2O = (2E)-4-hydroxy-3-methylbut-2-enyl diphosphate + 2 reduced [2Fe-2S]-[ferredoxin] + 2 H(+). It carries out the reaction dimethylallyl diphosphate + 2 oxidized [2Fe-2S]-[ferredoxin] + H2O = (2E)-4-hydroxy-3-methylbut-2-enyl diphosphate + 2 reduced [2Fe-2S]-[ferredoxin] + 2 H(+). Its pathway is isoprenoid biosynthesis; dimethylallyl diphosphate biosynthesis; dimethylallyl diphosphate from (2E)-4-hydroxy-3-methylbutenyl diphosphate: step 1/1. It functions in the pathway isoprenoid biosynthesis; isopentenyl diphosphate biosynthesis via DXP pathway; isopentenyl diphosphate from 1-deoxy-D-xylulose 5-phosphate: step 6/6. Functionally, catalyzes the conversion of 1-hydroxy-2-methyl-2-(E)-butenyl 4-diphosphate (HMBPP) into a mixture of isopentenyl diphosphate (IPP) and dimethylallyl diphosphate (DMAPP). Acts in the terminal step of the DOXP/MEP pathway for isoprenoid precursor biosynthesis. In Acinetobacter baylyi (strain ATCC 33305 / BD413 / ADP1), this protein is 4-hydroxy-3-methylbut-2-enyl diphosphate reductase.